An 81-amino-acid polypeptide reads, in one-letter code: Cytochrome b559 subunit alpha (81 aa).

A helical membrane pass occupies residues 21-35 (VIHALTIPALFLAGW). His-23 lines the heme pocket.

The protein belongs to the PsbE/PsbF family. Heterodimer of an alpha subunit and a beta subunit. PSII is composed of 1 copy each of membrane proteins PsbA, PsbB, PsbC, PsbD, PsbE, PsbF, PsbH, PsbI, PsbJ, PsbK, PsbL, PsbM, PsbT, PsbX, PsbY, PsbZ, Psb30/Ycf12, peripheral proteins PsbO, CyanoQ (PsbQ), PsbU, PsbV and a large number of cofactors. It forms dimeric complexes. Heme b is required as a cofactor.

It localises to the cellular thylakoid membrane. Its function is as follows. This b-type cytochrome is tightly associated with the reaction center of photosystem II (PSII). PSII is a light-driven water:plastoquinone oxidoreductase that uses light energy to abstract electrons from H(2)O, generating O(2) and a proton gradient subsequently used for ATP formation. It consists of a core antenna complex that captures photons, and an electron transfer chain that converts photonic excitation into a charge separation. The chain is Cytochrome b559 subunit alpha from Synechococcus sp. (strain JA-3-3Ab) (Cyanobacteria bacterium Yellowstone A-Prime).